The sequence spans 86 residues: Small ribosomal subunit protein uS15 (86 aa).

Belongs to the universal ribosomal protein uS15 family. As to quaternary structure, part of the 30S ribosomal subunit. Forms a bridge to the 50S subunit in the 70S ribosome, contacting the 23S rRNA.

In terms of biological role, one of the primary rRNA binding proteins, it binds directly to 16S rRNA where it helps nucleate assembly of the platform of the 30S subunit by binding and bridging several RNA helices of the 16S rRNA. Its function is as follows. Forms an intersubunit bridge (bridge B4) with the 23S rRNA of the 50S subunit in the ribosome. In Neorickettsia sennetsu (strain ATCC VR-367 / Miyayama) (Ehrlichia sennetsu), this protein is Small ribosomal subunit protein uS15.